A 438-amino-acid polypeptide reads, in one-letter code: uncharacterized protein (438 aa).

The signal sequence occupies residues 1-32 (MARPLLGKTSSVRRRLESLSACSIFFFLRKFC).

This is an uncharacterized protein from Frog virus 3 (isolate Goorha) (FV-3).